The chain runs to 24 residues: Small ribosomal subunit protein uS19 (24 aa).

Positions 1–24 (KLGEFSPTRTYRGHNKKDKKMQKK) are disordered. Positions 11–24 (YRGHNKKDKKMQKK) are enriched in basic residues.

Belongs to the universal ribosomal protein uS19 family.

Its function is as follows. Protein S19 forms a complex with S13 that binds strongly to the 16S ribosomal RNA. The protein is Small ribosomal subunit protein uS19 of Phytoplasma sp. (strain STRAWB2).